We begin with the raw amino-acid sequence, 292 residues long: uncharacterized protein (292 aa).

2 disordered regions span residues 29–50 and 166–292; these read SEKP…LRDS and VKRK…EELK. Serine 50 is modified (phosphoserine). Composition is skewed to polar residues over residues 176–189 and 208–217; these read NSKN…PVNN and GSPTNFSKLI. A compositionally biased stretch (basic and acidic residues) spans 221–239; the sequence is YKDEWLQQQKADSDRRTPK. 2 stretches are compositionally biased toward polar residues: residues 240-250 and 260-270; these read TSEASVSTQST and DTETPQNSETP.

Post-translationally, phosphorylated upon DNA damage.

This is an uncharacterized protein from Rattus norvegicus (Rat).